The sequence spans 306 residues: Probable GTP 3',8-cyclase (306 aa).

The Radical SAM core domain occupies 5–232; that stretch reads RFGRPVTNLR…RRRKYFLPVD (228 aa). Residue Arg14 coordinates GTP. The [4Fe-4S] cluster site is built by Cys21 and Cys25. Tyr27 lines the S-adenosyl-L-methionine pocket. Residue Cys28 participates in [4Fe-4S] cluster binding. Lys61 contributes to the GTP binding site. Residue Gly65 coordinates S-adenosyl-L-methionine. GTP is bound at residue Thr90. Position 114 (Ser114) interacts with S-adenosyl-L-methionine. Position 150 (Lys150) interacts with GTP. Met189 lines the S-adenosyl-L-methionine pocket. Cys250 and Cys253 together coordinate [4Fe-4S] cluster. Position 255-257 (255-257) interacts with GTP; the sequence is RLR. Cys267 provides a ligand contact to [4Fe-4S] cluster.

This sequence belongs to the radical SAM superfamily. MoaA family. It depends on [4Fe-4S] cluster as a cofactor.

The enzyme catalyses GTP + AH2 + S-adenosyl-L-methionine = (8S)-3',8-cyclo-7,8-dihydroguanosine 5'-triphosphate + 5'-deoxyadenosine + L-methionine + A + H(+). Its pathway is cofactor biosynthesis; molybdopterin biosynthesis. Its function is as follows. Catalyzes the cyclization of GTP to (8S)-3',8-cyclo-7,8-dihydroguanosine 5'-triphosphate. The chain is Probable GTP 3',8-cyclase from Pyrococcus abyssi (strain GE5 / Orsay).